A 206-amino-acid polypeptide reads, in one-letter code: Holliday junction branch migration complex subunit RuvA (206 aa).

The segment at 1-62 (MYDYLKGLIT…EDAQVLYGFP (62 aa)) is domain I. Residues 63 to 141 (NLDQRELFRK…SLLETIELPS (79 aa)) form a domain II region. The flexible linker stretch occupies residues 142–152 (TEDELPLFGVH). A domain III region spans residues 153–206 (PYKHELEEAILALAALGYSEKELEKIRPLLEDNDKLETTDAYMKQALQLLLKLK).

Belongs to the RuvA family. In terms of assembly, homotetramer. Forms an RuvA(8)-RuvB(12)-Holliday junction (HJ) complex. HJ DNA is sandwiched between 2 RuvA tetramers; dsDNA enters through RuvA and exits via RuvB. An RuvB hexamer assembles on each DNA strand where it exits the tetramer. Each RuvB hexamer is contacted by two RuvA subunits (via domain III) on 2 adjacent RuvB subunits; this complex drives branch migration. In the full resolvosome a probable DNA-RuvA(4)-RuvB(12)-RuvC(2) complex forms which resolves the HJ.

It localises to the cytoplasm. Functionally, the RuvA-RuvB-RuvC complex processes Holliday junction (HJ) DNA during genetic recombination and DNA repair, while the RuvA-RuvB complex plays an important role in the rescue of blocked DNA replication forks via replication fork reversal (RFR). RuvA specifically binds to HJ cruciform DNA, conferring on it an open structure. The RuvB hexamer acts as an ATP-dependent pump, pulling dsDNA into and through the RuvAB complex. HJ branch migration allows RuvC to scan DNA until it finds its consensus sequence, where it cleaves and resolves the cruciform DNA. This chain is Holliday junction branch migration complex subunit RuvA, found in Lysinibacillus sphaericus (strain C3-41).